A 234-amino-acid polypeptide reads, in one-letter code: Segregation and condensation protein A (234 aa).

This sequence belongs to the ScpA family. As to quaternary structure, component of a cohesin-like complex composed of ScpA, ScpB and the Smc homodimer, in which ScpA and ScpB bind to the head domain of Smc. The presence of the three proteins is required for the association of the complex with DNA.

The protein resides in the cytoplasm. Functionally, participates in chromosomal partition during cell division. May act via the formation of a condensin-like complex containing Smc and ScpB that pull DNA away from mid-cell into both cell halves. The polypeptide is Segregation and condensation protein A (Streptococcus pyogenes serotype M6 (strain ATCC BAA-946 / MGAS10394)).